We begin with the raw amino-acid sequence, 219 residues long: tRNA (guanine-N(7)-)-methyltransferase (219 aa).

Residues Glu-43, Asp-68, Glu-101, and Asn-124 each coordinate S-adenosyl-L-methionine. Residues Lys-128 and Asp-160 each coordinate substrate.

The protein belongs to the class I-like SAM-binding methyltransferase superfamily. TrmB family.

It catalyses the reaction guanosine(46) in tRNA + S-adenosyl-L-methionine = N(7)-methylguanosine(46) in tRNA + S-adenosyl-L-homocysteine. Its pathway is tRNA modification; N(7)-methylguanine-tRNA biosynthesis. Functionally, catalyzes the formation of N(7)-methylguanine at position 46 (m7G46) in tRNA. The chain is tRNA (guanine-N(7)-)-methyltransferase from Clostridium botulinum (strain Eklund 17B / Type B).